A 668-amino-acid polypeptide reads, in one-letter code: Protein ENTREP3 (668 aa).

A run of 3 helical transmembrane segments spans residues 34–54 (LLTLGLVQVLLGILVVTFSMV), 67–87 (SCPSWAGFSLAFSGVVGIVSW), and 91–111 (FTLVISFFSLLSVLCVMLSMA). A glycan (N-linked (GlcNAc...) asparagine) is linked at Asn-160. A helical transmembrane segment spans residues 174-194 (LFSVCGLTICAAIICTLSAIV). Phosphoserine occurs at positions 358 and 389. 3 disordered regions span residues 386 to 419 (FEESPLPRRPPRAARSYSCSAPEAPPPLGAPTAA), 442 to 503 (RVPR…SSDT), and 550 to 570 (SAEKRRPVPTFQKVPLPSGPA). Over residues 398–407 (AARSYSCSAP) the composition is skewed to low complexity. Ser-493 bears the Phosphoserine mark. Ser-574 bears the Phosphoserine mark. Disordered regions lie at residues 597–620 (KAPDPSGTGAHGHKQVPRSLWGRP) and 645–668 (GRRLERGTRPHSLSLNGGSRETGL). Residues 655–668 (HSLSLNGGSRETGL) are compositionally biased toward polar residues.

The protein belongs to the ENTREP family. May interact with WWOX. In terms of tissue distribution, widely expressed.

Its subcellular location is the membrane. The sequence is that of Protein ENTREP3 from Homo sapiens (Human).